Consider the following 345-residue polypeptide: Uroporphyrinogen decarboxylase (345 aa).

Substrate-binding positions include 27–31, F46, D76, Y152, S207, and H321; that span reads RQAGR.

The protein belongs to the uroporphyrinogen decarboxylase family. As to quaternary structure, homodimer.

The protein localises to the cytoplasm. The enzyme catalyses uroporphyrinogen III + 4 H(+) = coproporphyrinogen III + 4 CO2. The protein operates within porphyrin-containing compound metabolism; protoporphyrin-IX biosynthesis; coproporphyrinogen-III from 5-aminolevulinate: step 4/4. Functionally, catalyzes the decarboxylation of four acetate groups of uroporphyrinogen-III to yield coproporphyrinogen-III. The polypeptide is Uroporphyrinogen decarboxylase (Staphylococcus aureus (strain Mu3 / ATCC 700698)).